The chain runs to 187 residues: Interferon beta (187 aa).

The N-terminal stretch at 1–21 (MTNKCLLQIALLLCFSTTALS) is a signal peptide. At Tyr-24 the chain carries Phosphotyrosine. Cys-52 and Cys-162 are joined by a disulfide. An N-linked (GlcNAc...) asparagine glycan is attached at Asn-101.

The protein belongs to the alpha/beta interferon family. In terms of assembly, monomer.

The protein resides in the secreted. Functionally, type I interferon cytokine that plays a key role in the innate immune response to infection, developing tumors and other inflammatory stimuli. Signals via binding to high-affinity (IFNAR2) and low-affinity (IFNAR1) heterodimeric receptor, activating the canonical Jak-STAT signaling pathway resulting in transcriptional activation or repression of interferon-regulated genes that encode the effectors of the interferon response, such as antiviral proteins, regulators of cell proliferation and differentiation, and immunoregulatory proteins. Signals mostly via binding to a IFNAR1-IFNAR2 heterodimeric receptor, but can also function with IFNAR1 alone and independently of Jak-STAT pathways. Elicits a wide variety of responses, including antiviral and antibacterial activities, and can regulate the development of B-cells, myelopoiesis and lipopolysaccharide (LPS)-inducible production of tumor necrosis factor. Plays a role in neuronal homeostasis by regulating dopamine turnover and protecting dopaminergic neurons: acts by promoting neuronal autophagy and alpha-synuclein clearance, thereby preventing dopaminergic neuron loss. IFNB1 is more potent than interferon-alpha (IFN-alpha) in inducing the apoptotic and antiproliferative pathways required for control of tumor cell growth. The chain is Interferon beta (IFNB1) from Macaca fascicularis (Crab-eating macaque).